A 205-amino-acid chain; its full sequence is Ephrin-A1 (205 aa).

The signal sequence occupies residues M1 to A18. The Ephrin RBD domain maps to D19–I151. N26 carries N-linked (GlcNAc...) asparagine glycosylation. Intrachain disulfides connect C51/C92 and C80/C140. S182 is lipidated: GPI-anchor amidated serine. Residues A183–S205 constitute a propeptide, removed in mature form.

Belongs to the ephrin family. In terms of assembly, monomer. Homodimer. Forms heterodimers with EPHA2. Binds to the receptor tyrosine kinases EPHA2, EPHA3, EPHA4, EPHA5, EPHA6 and EPHA7. Also binds with low affinity to EPHA1. In terms of processing, undergoes proteolysis by a metalloprotease to give rise to a soluble monomeric form. N-Glycosylation is required for binding to EPHA2 receptor and inducing its internalization.

It is found in the cell membrane. The protein resides in the secreted. Its function is as follows. Cell surface GPI-bound ligand for Eph receptors, a family of receptor tyrosine kinases which are crucial for migration, repulsion and adhesion during neuronal, vascular and epithelial development. Binds promiscuously Eph receptors residing on adjacent cells, leading to contact-dependent bidirectional signaling into neighboring cells. Plays an important role in angiogenesis and tumor neovascularization. The recruitment of VAV2, VAV3 and PI3-kinase p85 subunit by phosphorylated EPHA2 is critical for EFNA1-induced RAC1 GTPase activation and vascular endothelial cell migration and assembly. Exerts anti-oncogenic effects in tumor cells through activation and down-regulation of EPHA2. Activates EPHA2 by inducing tyrosine phosphorylation which leads to its internalization and degradation. Acts as a negative regulator in the tumorigenesis of gliomas by down-regulating EPHA2 and FAK. Can evoke collapse of embryonic neuronal growth cone and regulates dendritic spine morphogenesis. This chain is Ephrin-A1 (EFNA1), found in Sus scrofa (Pig).